The sequence spans 72 residues: Heat shock factor-binding protein 1-like protein 1 (72 aa).

A coiled-coil region spans residues 12–66 (DLLQNAAENLLQEVEEHFQALTATLNLRMEEMGNRIEDLQRNVDDLMAQAGIENS).

It belongs to the HSBP1 family.

The protein is Heat shock factor-binding protein 1-like protein 1 (Hsbp1l1) of Rattus norvegicus (Rat).